The primary structure comprises 412 residues: Trafficking protein particle complex subunit 13 (412 aa).

It belongs to the TRAPPC13 family. Part of the multisubunit TRAPP (transport protein particle) complex.

The chain is Trafficking protein particle complex subunit 13 (trappc13) from Danio rerio (Zebrafish).